The following is a 521-amino-acid chain: Glucose-6-phosphate isomerase (521 aa).

The active-site Proton donor is Glu-327. Active-site residues include His-358 and Lys-486.

It belongs to the GPI family.

The protein localises to the cytoplasm. It carries out the reaction alpha-D-glucose 6-phosphate = beta-D-fructose 6-phosphate. It functions in the pathway carbohydrate biosynthesis; gluconeogenesis. Its pathway is carbohydrate degradation; glycolysis; D-glyceraldehyde 3-phosphate and glycerone phosphate from D-glucose: step 2/4. In terms of biological role, catalyzes the reversible isomerization of glucose-6-phosphate to fructose-6-phosphate. The polypeptide is Glucose-6-phosphate isomerase (Bordetella petrii (strain ATCC BAA-461 / DSM 12804 / CCUG 43448)).